A 147-amino-acid chain; its full sequence is Endoribonuclease YbeY (147 aa).

3 residues coordinate Zn(2+): His-107, His-111, and His-117.

It belongs to the endoribonuclease YbeY family. Requires Zn(2+) as cofactor.

It is found in the cytoplasm. Its function is as follows. Single strand-specific metallo-endoribonuclease involved in late-stage 70S ribosome quality control and in maturation of the 3' terminus of the 16S rRNA. The protein is Endoribonuclease YbeY of Solibacter usitatus (strain Ellin6076).